A 223-amino-acid chain; its full sequence is DNA mismatch repair protein MutH (223 aa).

The protein belongs to the MutH family.

It localises to the cytoplasm. Sequence-specific endonuclease that cleaves unmethylated GATC sequences. It is involved in DNA mismatch repair. This chain is DNA mismatch repair protein MutH, found in Shewanella oneidensis (strain ATCC 700550 / JCM 31522 / CIP 106686 / LMG 19005 / NCIMB 14063 / MR-1).